Reading from the N-terminus, the 93-residue chain is Large ribosomal subunit protein bL31 (93 aa).

A disordered region spans residues 68–93 (GSADAAADEKKPDAKNNNKDNTSKED). Residues 74 to 93 (ADEKKPDAKNNNKDNTSKED) show a composition bias toward basic and acidic residues.

The protein belongs to the bacterial ribosomal protein bL31 family. Type A subfamily. Part of the 50S ribosomal subunit.

Binds the 23S rRNA. The chain is Large ribosomal subunit protein bL31 from Prochlorococcus marinus (strain MIT 9313).